Here is a 278-residue protein sequence, read N- to C-terminus: Putative phosphatase MG265 (278 aa).

Asp9 acts as the Nucleophile in catalysis. Position 9 (Asp9) interacts with Mg(2+). Leu10 serves as a coordination point for phosphate. Asp11 is a Mg(2+) binding site. Residues 43 to 44 and Lys204 contribute to the phosphate site; that span reads SG. Asp227 serves as a coordination point for Mg(2+). Asn230 contacts phosphate.

It belongs to the HAD-like hydrolase superfamily. Cof family. Mg(2+) serves as cofactor.

The sequence is that of Putative phosphatase MG265 from Mycoplasma genitalium (strain ATCC 33530 / DSM 19775 / NCTC 10195 / G37) (Mycoplasmoides genitalium).